A 706-amino-acid chain; its full sequence is Protein-glutamine gamma-glutamyltransferase 6 (706 aa).

Ca(2+) contacts are provided by Ala223, Asn226, and Asn228. The active site involves Cys274. Ca(2+)-binding residues include Asp303, Asp305, Asn307, Ser309, and Asp327. Catalysis depends on residues His333 and Asp356. Asn396, Thr417, Glu445, and Glu450 together coordinate Ca(2+).

The protein belongs to the transglutaminase superfamily. Transglutaminase family. The cofactor is Ca(2+).

The protein localises to the cytoplasm. The catalysed reaction is L-glutaminyl-[protein] + L-lysyl-[protein] = [protein]-L-lysyl-N(6)-5-L-glutamyl-[protein] + NH4(+). In terms of biological role, catalyzes the cross-linking of proteins and the conjugation of polyamines to proteins. The protein is Protein-glutamine gamma-glutamyltransferase 6 (TGM6) of Homo sapiens (Human).